Consider the following 414-residue polypeptide: Collagenase (414 aa).

This sequence belongs to the peptidase U32 family. Homodimer. The cofactor is a metal cation.

Functionally, has collagenase activity. Hydrolyzes type I collagen. May play a role in virulence. This is Collagenase (prtC) from Porphyromonas gingivalis (strain ATCC BAA-308 / W83).